Consider the following 370-residue polypeptide: tRNA-specific 2-thiouridylase MnmA (370 aa).

ATP-binding positions include 24–31 (AMSGGVDS) and Leu-50. The active-site Nucleophile is the Cys-118. Cys-118 and Cys-214 form a disulfide bridge. Gly-142 provides a ligand contact to ATP. Residues 164 to 166 (KDQ) form an interaction with tRNA region. Cys-214 serves as the catalytic Cysteine persulfide intermediate.

It belongs to the MnmA/TRMU family.

The protein localises to the cytoplasm. It carries out the reaction S-sulfanyl-L-cysteinyl-[protein] + uridine(34) in tRNA + AH2 + ATP = 2-thiouridine(34) in tRNA + L-cysteinyl-[protein] + A + AMP + diphosphate + H(+). Functionally, catalyzes the 2-thiolation of uridine at the wobble position (U34) of tRNA, leading to the formation of s(2)U34. The polypeptide is tRNA-specific 2-thiouridylase MnmA (Ehrlichia ruminantium (strain Welgevonden)).